Consider the following 99-residue polypeptide: A-type ATP synthase subunit F (99 aa).

It belongs to the V-ATPase F subunit family. Has multiple subunits with at least A(3), B(3), C, D, E, F, H, I and proteolipid K(x).

It is found in the cell membrane. In terms of biological role, component of the A-type ATP synthase that produces ATP from ADP in the presence of a proton gradient across the membrane. In Methanococcus vannielii (strain ATCC 35089 / DSM 1224 / JCM 13029 / OCM 148 / SB), this protein is A-type ATP synthase subunit F.